Consider the following 429-residue polypeptide: 3-phosphoshikimate 1-carboxyvinyltransferase (429 aa).

Residues Lys-21, Ser-22, and Arg-26 each coordinate 3-phosphoshikimate. Lys-21 serves as a coordination point for phosphoenolpyruvate. Phosphoenolpyruvate contacts are provided by Gly-94 and Arg-122. Ser-167, Gln-169, Asp-315, and Lys-342 together coordinate 3-phosphoshikimate. Gln-169 serves as a coordination point for phosphoenolpyruvate. Asp-315 (proton acceptor) is an active-site residue. Positions 346 and 388 each coordinate phosphoenolpyruvate.

The protein belongs to the EPSP synthase family. In terms of assembly, monomer.

The protein localises to the cytoplasm. It catalyses the reaction 3-phosphoshikimate + phosphoenolpyruvate = 5-O-(1-carboxyvinyl)-3-phosphoshikimate + phosphate. The protein operates within metabolic intermediate biosynthesis; chorismate biosynthesis; chorismate from D-erythrose 4-phosphate and phosphoenolpyruvate: step 6/7. Functionally, catalyzes the transfer of the enolpyruvyl moiety of phosphoenolpyruvate (PEP) to the 5-hydroxyl of shikimate-3-phosphate (S3P) to produce enolpyruvyl shikimate-3-phosphate and inorganic phosphate. This chain is 3-phosphoshikimate 1-carboxyvinyltransferase, found in Desulforamulus reducens (strain ATCC BAA-1160 / DSM 100696 / MI-1) (Desulfotomaculum reducens).